Reading from the N-terminus, the 237-residue chain is Ribonuclease PH (237 aa).

Phosphate-binding positions include R86 and 124–126; that span reads GTR.

This sequence belongs to the RNase PH family. In terms of assembly, homohexameric ring arranged as a trimer of dimers.

The catalysed reaction is tRNA(n+1) + phosphate = tRNA(n) + a ribonucleoside 5'-diphosphate. Phosphorolytic 3'-5' exoribonuclease that plays an important role in tRNA 3'-end maturation. Removes nucleotide residues following the 3'-CCA terminus of tRNAs; can also add nucleotides to the ends of RNA molecules by using nucleoside diphosphates as substrates, but this may not be physiologically important. Probably plays a role in initiation of 16S rRNA degradation (leading to ribosome degradation) during starvation. This chain is Ribonuclease PH, found in Shewanella sediminis (strain HAW-EB3).